A 150-amino-acid chain; its full sequence is Ribosome maturation factor RimP (150 aa).

This sequence belongs to the RimP family.

It is found in the cytoplasm. Required for maturation of 30S ribosomal subunits. This Thermotoga petrophila (strain ATCC BAA-488 / DSM 13995 / JCM 10881 / RKU-1) protein is Ribosome maturation factor RimP.